The chain runs to 76 residues: Dermaseptin-H1 (76 aa).

The N-terminal stretch at 1 to 22 is a signal peptide; sequence MDILKKSLFIVLFLGLVSLSIC. A propeptide spanning residues 23–45 is cleaved from the precursor; the sequence is EEEKRENEDEEEQEDDEQSEEKR. The disordered stretch occupies residues 25–44; the sequence is EKRENEDEEEQEDDEQSEEK. Residues 30–41 show a composition bias toward acidic residues; that stretch reads EDEEEQEDDEQS. At Q73 the chain carries Glutamine amide. Positions 75 to 76 are excised as a propeptide; that stretch reads EQ.

In terms of tissue distribution, expressed by the skin glands.

The protein localises to the secreted. Has antimicrobial activity. This is Dermaseptin-H1 from Pithecopus hypochondrialis (Orange-legged leaf frog).